We begin with the raw amino-acid sequence, 161 residues long: Putative 4-hydroxy-4-methyl-2-oxoglutarate aldolase (161 aa).

Substrate-binding positions include 77-80 (GGNL) and arginine 99. Aspartate 100 contacts a divalent metal cation.

It belongs to the class II aldolase/RraA-like family. Homotrimer. Requires a divalent metal cation as cofactor.

The catalysed reaction is 4-hydroxy-4-methyl-2-oxoglutarate = 2 pyruvate. The enzyme catalyses oxaloacetate + H(+) = pyruvate + CO2. Its function is as follows. Catalyzes the aldol cleavage of 4-hydroxy-4-methyl-2-oxoglutarate (HMG) into 2 molecules of pyruvate. Also contains a secondary oxaloacetate (OAA) decarboxylase activity due to the common pyruvate enolate transition state formed following C-C bond cleavage in the retro-aldol and decarboxylation reactions. This chain is Putative 4-hydroxy-4-methyl-2-oxoglutarate aldolase, found in Methylococcus capsulatus (strain ATCC 33009 / NCIMB 11132 / Bath).